The primary structure comprises 327 residues: Selenate reductase subunit beta (327 aa).

4Fe-4S ferredoxin-type domains lie at 6 to 35 (LAYV…RDGR), 124 to 155 (NHYF…KREE), and 157 to 186 (GLVV…FNLQ). Positions 15, 18, 21, 25, 133, 136, and 141 each coordinate [4Fe-4S] cluster. Residues Cys-145, Cys-166, and Cys-172 each contribute to the [3Fe-4S] cluster site. [4Fe-4S] cluster is bound by residues Cys-176, Cys-193, Cys-196, Cys-208, and Cys-212.

In terms of assembly, heterotrimer of alpha (SerA), beta (SerB) and gamma (SerC) subunits. It depends on [3Fe-4S] cluster as a cofactor. Requires [4Fe-4S] cluster as cofactor.

The protein resides in the periplasm. It catalyses the reaction selenite + 2 Fe(III)-[cytochrome c] + H2O = 2 Fe(II)-[cytochrome] + selenate + 2 H(+). With respect to regulation, enzyme isolated from cells grown in a tungstate rich environment shows a 20-fold reduction in selenate reductase activity. Its function is as follows. Component of the selenate reductase, which catalyzes the reduction of selenate to selenite and allows anaerobic growth with selenate as the sole terminal electron acceptor. A c-type di-heme cytochrome of the cytc4 family was shown to donate electrons to the selenate reductase in vitro. SerABC can also use reduced benzyl viologen or reduced methyl viologen as an electron donor. This subunit transfers electrons from SerC to SerA. The reductase is specific for selenate, and cannot reduce nitrate, nitrite, chlorate or sulfate. The protein is Selenate reductase subunit beta of Thauera selenatis.